Reading from the N-terminus, the 316-residue chain is Phosphatidylinositol mannoside acyltransferase (316 aa).

Histidine 137 acts as the Proton acceptor in catalysis. Residues histidine 137 and arginine 175 each coordinate hexadecanoyl-CoA. The active site involves glutamate 211. Glutamate 240 serves as a coordination point for hexadecanoyl-CoA.

This sequence belongs to the LpxL/LpxM/LpxP family.

It localises to the cell inner membrane. The catalysed reaction is a 2,6-O-bis(alpha-D-mannopyranosyl)-1-phosphatidyl-1D-myo-inositol + an acyl-CoA = a 2-O-(alpha-D-mannosyl)-6-O-(6-O-acyl-alpha-D-mannosyl)-1-phosphatidyl-1D-myo-inositol + CoA. The enzyme catalyses a 1,2-diacyl-sn-glycero-3-phospho-[alpha-D-mannopyranosyl-(1&lt;-&gt;6)-D-myo-inositol] + an acyl-CoA = a 1,2-diacyl-sn-glycero-3-phospho-[alpha-D-6-acyl-mannopyranosyl-(1&lt;-&gt;6)-D-myo-inositol] + CoA. Its pathway is phospholipid metabolism; phosphatidylinositol metabolism. Catalyzes the transfer of a palmitoyl moiety from palmitoyl-CoA to the 6-position of the mannose ring linked to the 2-position of myo-inositol in phosphatidyl-myo-inositol monomannoside (PIM1) or dimannoside (PIM2). Essential for growth and survival in axenic cultures and during macrophage infection and in a mouse model of infection. The sequence is that of Phosphatidylinositol mannoside acyltransferase from Mycobacterium tuberculosis (strain ATCC 25618 / H37Rv).